The sequence spans 561 residues: Potassium-transporting ATPase potassium-binding subunit (561 aa).

Helical transmembrane passes span isoleucine 5–methionine 25, lysine 63–leucine 83, leucine 103–glycine 122, isoleucine 133–isoleucine 153, leucine 179–phenylalanine 199, isoleucine 255–isoleucine 275, alanine 281–tyrosine 301, alanine 380–valine 400, leucine 418–valine 438, isoleucine 485–valine 505, and alanine 531–leucine 551.

It belongs to the KdpA family. The system is composed of three essential subunits: KdpA, KdpB and KdpC.

The protein resides in the cell membrane. In terms of biological role, part of the high-affinity ATP-driven potassium transport (or Kdp) system, which catalyzes the hydrolysis of ATP coupled with the electrogenic transport of potassium into the cytoplasm. This subunit binds the extracellular potassium ions and delivers the ions to the membrane domain of KdpB through an intramembrane tunnel. This is Potassium-transporting ATPase potassium-binding subunit from Caldanaerobacter subterraneus subsp. tengcongensis (strain DSM 15242 / JCM 11007 / NBRC 100824 / MB4) (Thermoanaerobacter tengcongensis).